Consider the following 457-residue polypeptide: tRNA modification GTPase MnmE (457 aa).

(6S)-5-formyl-5,6,7,8-tetrahydrofolate is bound by residues arginine 25, glutamate 87, and arginine 126. Residues 223–377 (GISTAIIGRP…IEERINNLFF (155 aa)) enclose the TrmE-type G domain. Asparagine 233 contributes to the K(+) binding site. GTP-binding positions include 233-238 (NVGKSS), 252-258 (TDIAGTT), and 277-280 (DTAG). Serine 237 lines the Mg(2+) pocket. K(+) is bound by residues threonine 252, isoleucine 254, and threonine 257. Threonine 258 is a binding site for Mg(2+). Lysine 457 contacts (6S)-5-formyl-5,6,7,8-tetrahydrofolate.

Belongs to the TRAFAC class TrmE-Era-EngA-EngB-Septin-like GTPase superfamily. TrmE GTPase family. As to quaternary structure, homodimer. Heterotetramer of two MnmE and two MnmG subunits. It depends on K(+) as a cofactor.

The protein localises to the cytoplasm. In terms of biological role, exhibits a very high intrinsic GTPase hydrolysis rate. Involved in the addition of a carboxymethylaminomethyl (cmnm) group at the wobble position (U34) of certain tRNAs, forming tRNA-cmnm(5)s(2)U34. The polypeptide is tRNA modification GTPase MnmE (Streptococcus pneumoniae (strain Hungary19A-6)).